A 301-amino-acid polypeptide reads, in one-letter code: Rhodopsin (301 aa).

Over 1–18 (LHMIHLHWYQYPPMNPMM) the chain is Extracellular. Residues 19-43 (YPLLLIFMLFTGILCLAGNFVTIWV) traverse the membrane as a helical segment. At 44–55 (FMNTKSLRTPAN) the chain is on the cytoplasmic side. A helical transmembrane segment spans residues 56 to 78 (LLVVNLAMSDFLMMFTMFPPMMV). Residues 79–92 (TCYYHTWTLGPTFC) lie on the Extracellular side of the membrane. A disulfide bridge links Cys-92 with Cys-169. Residues 93-115 (QVYAFLGNLCGCASIWTMVFITF) traverse the membrane as a helical segment. Positions 116 to 118 (DRY) match the 'Ionic lock' involved in activated form stabilization motif. At 116–134 (DRYNVIVKGVAGEPLSTKK) the chain is on the cytoplasmic side. Residues 135 to 155 (ASLWILSVWVLSTAWCIAPFF) traverse the membrane as a helical segment. At 156 to 182 (GWNHYVPEGNLTGCGTDYLSEDILSRS) the chain is on the extracellular side. N-linked (GlcNAc...) asparagine glycosylation is present at Asn-165. Residues 183 to 204 (YLYIYSTWVYFLPLAITIYCYV) traverse the membrane as a helical segment. Over 205–245 (FIIKAVAAHEKGMRDQAKKMGIKSLRNEEAQKTSAECRLAK) the chain is Cytoplasmic. A helical transmembrane segment spans residues 246–267 (NAMTTVALWFIAWTPCLLINWV). Over 268 to 278 (GMFARSYLSPV) the chain is Extracellular. The chain crosses the membrane as a helical span at residues 279-300 (YTIWGYVFAKANAVYNPIVYAI). Lys-288 carries the N6-(retinylidene)lysine modification.

The protein belongs to the G-protein coupled receptor 1 family. Opsin subfamily. Homodimer. Interacts with GNAQ. In terms of processing, contains one covalently linked retinal chromophore.

It is found in the cell projection. It localises to the rhabdomere membrane. Functionally, photoreceptor required for image-forming vision at low light intensity. Can use both retinal and 3-dehydroretinal as visual pigment. Light-induced isomerization of 11-cis to all-trans retinal triggers a conformational change that activates signaling via G-proteins. Signaling via GNAQ probably mediates the activation of phospholipase C. This chain is Rhodopsin (RHO), found in Cambarus hubrichti (Salem cave crayfish).